A 197-amino-acid chain; its full sequence is Putative rho GDP-dissociation inhibitor 1 (197 aa).

It belongs to the Rho GDI family. Interacts with rac1A, rac1B, rac1C, racB, raCC and RacE.

Its subcellular location is the cytoplasm. Its function is as follows. Regulates the GDP/GTP exchange reaction of the Rho proteins by inhibiting the dissociation of GDP from them, and the subsequent binding of GTP to them. Regulates the Rac-dependent signaling pathways controlling cytokinesis, actin reorganization and the contractile vacuole. Required for efficient accumulation of cap at the cell cortex. This Dictyostelium discoideum (Social amoeba) protein is Putative rho GDP-dissociation inhibitor 1 (rdiA).